The chain runs to 284 residues: Ribose-phosphate pyrophosphokinase (284 aa).

ATP-binding positions include 34-36 and 92-93; these read DNE and RQ. Mg(2+) is bound by residues His125 and Asp163. The active site involves Lys186. D-ribose 5-phosphate contacts are provided by residues Arg188, Asp212, and 216-220; that span reads STGGT.

It belongs to the ribose-phosphate pyrophosphokinase family. Class III (archaeal) subfamily. Homotetramer. Mg(2+) serves as cofactor.

Its subcellular location is the cytoplasm. It carries out the reaction D-ribose 5-phosphate + ATP = 5-phospho-alpha-D-ribose 1-diphosphate + AMP + H(+). It functions in the pathway metabolic intermediate biosynthesis; 5-phospho-alpha-D-ribose 1-diphosphate biosynthesis; 5-phospho-alpha-D-ribose 1-diphosphate from D-ribose 5-phosphate (route I): step 1/1. With respect to regulation, activated by inorganic phosphate, with a maximal activity at 190 mM. Above this concentration inorganic phosphate progressively inhibits the kinase. Completely inhibited by ADP, and partially inhibited by alpha,beta-methylene ATP (mATP). Lack of allosteric regulation. Its function is as follows. Involved in the biosynthesis of the central metabolite phospho-alpha-D-ribosyl-1-pyrophosphate (PRPP) via the transfer of pyrophosphoryl group from ATP to 1-hydroxyl of ribose-5-phosphate (Rib-5-P). It can also use dATP as diphosphoryl donor. The sequence is that of Ribose-phosphate pyrophosphokinase from Methanocaldococcus jannaschii (strain ATCC 43067 / DSM 2661 / JAL-1 / JCM 10045 / NBRC 100440) (Methanococcus jannaschii).